The following is a 379-amino-acid chain: V-type proton ATPase subunit S1 (379 aa).

The N-terminal stretch at 1-17 is a signal peptide; sequence MLWKSLIALCVIGAAVA. Residues 18–333 lie on the Lumenal side of the membrane; the sequence is EQTPVFLWGA…WDCVGFVTPG (316 aa). N-linked (GlcNAc...) asparagine glycans are attached at residues asparagine 225 and asparagine 284. A disulfide bond links cysteine 282 and cysteine 326. Residues 334-354 form a helical membrane-spanning segment; the sequence is ILMGLFVVALLLVIMFVGVCW. The Cytoplasmic segment spans residues 355-379; that stretch reads MMDINTMDRFDDPKGKTITINAAAE.

The protein belongs to the vacuolar ATPase subunit S1 family. In terms of assembly, accessory component of the multisubunit proton-transporting vacuolar (V)-ATPase protein pump. May interact with ATP6AP2.

It localises to the endoplasmic reticulum membrane. In terms of biological role, accessory subunit of the proton-transporting vacuolar (V)-ATPase protein pump, which is required for luminal acidification of secretory vesicles. In Drosophila melanogaster (Fruit fly), this protein is V-type proton ATPase subunit S1.